Consider the following 571-residue polypeptide: Putative pyruvate decarboxylase C13A11.06 (571 aa).

Residues aspartate 29 and histidine 118 each contribute to the pyruvate site. Residues threonine 395 and glycine 418 to isoleucine 420 contribute to the thiamine diphosphate site. Mg(2+) is bound at residue aspartate 450. Thiamine diphosphate-binding positions include glycine 451–serine 452 and asparagine 477–isoleucine 482. Mg(2+)-binding residues include asparagine 477 and glycine 479. A pyruvate-binding site is contributed by glutamate 483.

It belongs to the TPP enzyme family. In terms of assembly, homotetramer. Mg(2+) is required as a cofactor. It depends on thiamine diphosphate as a cofactor.

The enzyme catalyses a 2-oxocarboxylate + H(+) = an aldehyde + CO2. The catalysed reaction is pyruvate + H(+) = acetaldehyde + CO2. This chain is Putative pyruvate decarboxylase C13A11.06, found in Schizosaccharomyces pombe (strain 972 / ATCC 24843) (Fission yeast).